Reading from the N-terminus, the 466-residue chain is Zinc finger protein ZIC 3 (466 aa).

Over residues 65 to 80 (DLSSGQSSAFTPQGSG) the composition is skewed to polar residues. The interval 65 to 103 (DLSSGQSSAFTPQGSGYANALGHHHHHHHHHHASQVPTY) is disordered. Over residues 86–97 (GHHHHHHHHHHA) the composition is skewed to basic residues. Residue Lys-247 forms a Glycyl lysine isopeptide (Lys-Gly) (interchain with G-Cter in SUMO2) linkage. Residues 250–285 (LSCKWIEEAQLSRPKKSCDRTFSTMHELVTHVTMEH) form a C2H2-type 1; atypical zinc finger. Residues 294-321 (HVCYWEECPREGKSFKAKYKLVNHIRVH) form a C2H2-type 2; atypical zinc finger. 2 short sequence motifs (nuclear localization signal) span residues 296-321 (CYWE…IRVH) and 329-351 (CPFP…KRTH). C2H2-type zinc fingers lie at residues 327–351 (FPCP…KRTH), 357–381 (FKCE…MHVH), and 387–409 (YICK…MKVH). Positions 403–466 (RKHMKVHESQ…LPPNFNEWYV (64 aa)) are disordered. Residues 411–427 (SQGSDSSPAASSGYESS) show a composition bias toward low complexity. Residues 434 to 454 (SANSKDTTKTPSAVQTSTSHN) show a composition bias toward polar residues.

The protein belongs to the GLI C2H2-type zinc-finger protein family. Interacts with KPNA1 and KPNA6. Interacts (via C2H2-type domains 3, 4 and 5) with GLI3; the interaction enhances its transcriptional activity. Interacts (via the C2H2-type domains 3, 4 and 5) with MDFIC (via the C2H2-type domains 3, 4 and 5); the interaction reduces its transcriptional activity. In terms of tissue distribution, CNS. A high level expression is seen in the cerebellum.

The protein localises to the nucleus. It localises to the cytoplasm. Its function is as follows. Acts as a transcriptional activator. Required in the earliest stages in both axial midline development and left-right (LR) asymmetry specification. Binds to the minimal GLI-consensus sequence 5'-GGGTGGTC-3'. This Mus musculus (Mouse) protein is Zinc finger protein ZIC 3 (Zic3).